The following is an 87-amino-acid chain: Small ribosomal subunit protein bS20 (87 aa).

The segment at 1-28 (MANIKSQQKRNRTNERARLRNKSVKSSL) is disordered.

This sequence belongs to the bacterial ribosomal protein bS20 family.

In terms of biological role, binds directly to 16S ribosomal RNA. This chain is Small ribosomal subunit protein bS20, found in Mycobacterium marinum (strain ATCC BAA-535 / M).